Reading from the N-terminus, the 334-residue chain is Peroxidase 65 (334 aa).

An N-terminal signal peptide occupies residues 1–28; the sequence is MSNMQFSRGFNPFVILFCLAVVAPIISA. Disulfide bonds link cysteine 42–cysteine 123, cysteine 75–cysteine 80, cysteine 129–cysteine 326, and cysteine 208–cysteine 236. Histidine 73 serves as the catalytic Proton acceptor. The Ca(2+) site is built by aspartate 74, glycine 79, aspartate 81, and serine 83. Proline 171 lines the substrate pocket. N-linked (GlcNAc...) asparagine glycosylation occurs at asparagine 174. Position 201 (histidine 201) interacts with heme b. Threonine 202 contacts Ca(2+). Asparagine 238 is a glycosylation site (N-linked (GlcNAc...) asparagine). Aspartate 250, threonine 253, and aspartate 258 together coordinate Ca(2+). N-linked (GlcNAc...) asparagine glycosylation is found at asparagine 282 and asparagine 294.

This sequence belongs to the peroxidase family. Classical plant (class III) peroxidase subfamily. The cofactor is heme b. It depends on Ca(2+) as a cofactor.

The protein resides in the secreted. It carries out the reaction 2 a phenolic donor + H2O2 = 2 a phenolic radical donor + 2 H2O. Removal of H(2)O(2), oxidation of toxic reductants, biosynthesis and degradation of lignin, suberization, auxin catabolism, response to environmental stresses such as wounding, pathogen attack and oxidative stress. These functions might be dependent on each isozyme/isoform in each plant tissue. This chain is Peroxidase 65 (PER65), found in Arabidopsis thaliana (Mouse-ear cress).